We begin with the raw amino-acid sequence, 406 residues long: Exodeoxyribonuclease 7 large subunit (406 aa).

This sequence belongs to the XseA family. As to quaternary structure, heterooligomer composed of large and small subunits.

It is found in the cytoplasm. It carries out the reaction Exonucleolytic cleavage in either 5'- to 3'- or 3'- to 5'-direction to yield nucleoside 5'-phosphates.. In terms of biological role, bidirectionally degrades single-stranded DNA into large acid-insoluble oligonucleotides, which are then degraded further into small acid-soluble oligonucleotides. The protein is Exodeoxyribonuclease 7 large subunit of Thermobifida fusca (strain YX).